A 369-amino-acid chain; its full sequence is tRNA pseudouridine synthase D (369 aa).

Aspartate 80 (nucleophile) is an active-site residue. Residues glycine 156 to leucine 318 form the TRUD domain.

This sequence belongs to the pseudouridine synthase TruD family.

It catalyses the reaction uridine(13) in tRNA = pseudouridine(13) in tRNA. Responsible for synthesis of pseudouridine from uracil-13 in transfer RNAs. In Xanthomonas oryzae pv. oryzae (strain KACC10331 / KXO85), this protein is tRNA pseudouridine synthase D.